Here is a 551-residue protein sequence, read N- to C-terminus: Glucose-6-phosphate isomerase (551 aa).

Residues Gly161–Ser162, Ser212–Thr217, Gln356, Glu360, His391, and Lys516 contribute to the D-glucose 6-phosphate site. Residue Glu360 is the Proton donor of the active site. Catalysis depends on residues His391 and Lys516.

It belongs to the GPI family. Homodimer.

The protein localises to the cytoplasm. It is found in the cytosol. The enzyme catalyses alpha-D-glucose 6-phosphate = beta-D-fructose 6-phosphate. It functions in the pathway carbohydrate degradation; glycolysis; D-glyceraldehyde 3-phosphate and glycerone phosphate from D-glucose: step 2/4. In terms of biological role, in the cytoplasm, catalyzes the conversion of glucose-6-phosphate to fructose-6-phosphate, the second step in glycolysis, and the reverse reaction during gluconeogenesis. The polypeptide is Glucose-6-phosphate isomerase (gpi1) (Agaricus bisporus (White button mushroom)).